Here is a 438-residue protein sequence, read N- to C-terminus: Protein translocase subunit SecY (438 aa).

The next 10 helical transmembrane spans lie at 18–38 (ILFTLGILVLYRVSAALPSPG), 76–96 (VGVMPYITASIIVQLLTVVIP), 121–141 (IALAVLQATSIVALAANGGLL), 154–174 (IFSLVVIVLVMTGGAALVMWM), 177–197 (LITERGIGNGMSLLIFVGIAA), 212–232 (GVIFAAVCLAALVIIVGVVFV), 269–289 (VIPVIFASSLIYIPHLITQLV), 315–335 (PVYINIYFGLIIFFTYFYVSV), 375–395 (LPGSIYLGAIAVLPNLFLQIG), and 398–418 (GEVQNLPFGGTAVLIMIGVGL).

It belongs to the SecY/SEC61-alpha family. In terms of assembly, component of the Sec protein translocase complex. Heterotrimer consisting of SecY, SecE and SecG subunits. The heterotrimers can form oligomers, although 1 heterotrimer is thought to be able to translocate proteins. Interacts with the ribosome. Interacts with SecDF, and other proteins may be involved. Interacts with SecA.

It is found in the cell membrane. Its function is as follows. The central subunit of the protein translocation channel SecYEG. Consists of two halves formed by TMs 1-5 and 6-10. These two domains form a lateral gate at the front which open onto the bilayer between TMs 2 and 7, and are clamped together by SecE at the back. The channel is closed by both a pore ring composed of hydrophobic SecY resides and a short helix (helix 2A) on the extracellular side of the membrane which forms a plug. The plug probably moves laterally to allow the channel to open. The ring and the pore may move independently. In Mycobacterium leprae (strain TN), this protein is Protein translocase subunit SecY.